Reading from the N-terminus, the 212-residue chain is Thymidylate kinase (212 aa).

10 to 17 provides a ligand contact to ATP; the sequence is GPDGAGKT.

Belongs to the thymidylate kinase family.

The enzyme catalyses dTMP + ATP = dTDP + ADP. Phosphorylation of dTMP to form dTDP in both de novo and salvage pathways of dTTP synthesis. The sequence is that of Thymidylate kinase from Exiguobacterium sibiricum (strain DSM 17290 / CCUG 55495 / CIP 109462 / JCM 13490 / 255-15).